The following is a 119-amino-acid chain: UPF0231 protein YPTB0717 (119 aa).

This sequence belongs to the UPF0231 family.

This is UPF0231 protein YPTB0717 from Yersinia pseudotuberculosis serotype I (strain IP32953).